We begin with the raw amino-acid sequence, 237 residues long: dTDP-3-amino-3,4,6-trideoxy-alpha-D-glucopyranose N,N-dimethyltransferase (237 aa).

Substrate contacts are provided by Tyr-14 and Arg-17. Residues Tyr-21, Ala-46, Glu-67, 89-90 (DM), and Met-105 each bind S-adenosyl-L-methionine. Residues 145-147 (TFA), Ser-152, 165-169 (RVSHS), and Arg-229 contribute to the substrate site.

This sequence belongs to the methyltransferase TylM1/DesVI family. Homodimer.

The enzyme catalyses dTDP-3-amino-3,4,6-trideoxy-alpha-D-glucose + 2 S-adenosyl-L-methionine = dTDP-alpha-D-desosamine + 2 S-adenosyl-L-homocysteine + 2 H(+). The protein operates within antibiotic biosynthesis. In terms of biological role, S-adenosyl-L-methionine-dependent methyltransferase involved in the biosynthesis of desosamine, found in certain macrolide antibiotics such as erthyromycin, azithromycin, clarithromycin, and methymycin. Catalyzes the last step in the biosynthesis of dTDP-desosamine, i.e. the N,N-dimethylation of the 3-amino group of dTDP-3-amino-3,4,6-trideoxy-alpha-D-glucose. The protein is dTDP-3-amino-3,4,6-trideoxy-alpha-D-glucopyranose N,N-dimethyltransferase of Streptomyces venezuelae.